A 434-amino-acid chain; its full sequence is CinA-like protein (434 aa).

This sequence belongs to the CinA family.

The protein is CinA-like protein of Mycolicibacterium paratuberculosis (strain ATCC BAA-968 / K-10) (Mycobacterium paratuberculosis).